The chain runs to 372 residues: Protein phosphatase Mn(2+)-dependent 1K (372 aa).

The transit peptide at 1-29 (MLSTAFITLVRSGRNQVKKRVLLSSILLQ) directs the protein to the mitochondrion. Positions 46-61 (RCSRFDPDGSGQPATW) are critical for association with the BCKDH complex. The 253-residue stretch at 94-346 (NVGCASLIGK…DNSTAVVVPF (253 aa)) folds into the PPM-type phosphatase domain. Mn(2+)-binding residues include Asp-127 and Gly-128. Ser-248 is modified (phosphoserine). Positions 298 and 337 each coordinate Mn(2+).

Belongs to the PP2C family. Interacts with E1 and E2 components of the branched-chain alpha-ketoacid dehydrogenase (BCKDH) complex. Interacts with both BCKDHA and BCKDHB chains of the E1 subunit. Interacts with the 24-meric DBT/E2 core of the BCKD complex with a 1:1 stoichiometry; the N-terminal region (residues 49-61) of PPM1K and C-terminal linker of the lipoyl domain of DBT/E2 (residues 145-160) are critical for this interaction whereas the lipoyl prosthetic group is dispensable. Competes with BCKDK for binding to DBT/E2; this interaction is modulated by branched-chain alpha-keto acids (BCKAs). At steady state, BCKDH holoenzyme preferentially binds BCKDK and BCKDHA/E1 is phosphorylated. In response to high levels of BCKAs, BCKDK is replaced by PPM1K leading to BCKDHA/E1 dephosphorylation. Requires Mn(2+) as cofactor.

Its subcellular location is the mitochondrion matrix. It catalyses the reaction O-phospho-L-seryl-[3-methyl-2-oxobutanoate dehydrogenase] + H2O = L-seryl-[3-methyl-2-oxobutanoate dehydrogenase] + phosphate. The enzyme catalyses O-phospho-L-seryl-[protein] + H2O = L-seryl-[protein] + phosphate. It functions in the pathway protein modification. Its function is as follows. Serine/threonine-protein phosphatase component of macronutrients metabolism. Together with BCKDK serves as a metabolic regulatory node that coordinates branched-chain amino acids (BCAAs) and protein synthesis with glucose and lipid metabolism via two distinct phosphoprotein targets: BCKDHA/E1a subunit of the branched-chain alpha-ketoacid dehydrogenase (BCKDH) complex and ACLY, a lipogenic enzyme of Krebs cycle. At high levels of branched-chain ketoacids (BCKAs), dephosphorylates and activates mitochondrial BCKDH complex, a multisubunit complex consisting of three components, heterotetrameric E1 composed of BCKDHA and BCKDHB chains, 24-meric E2 core composed of DBT and homodimeric E3 composed of DLD, each involved in different steps of BCAA catabolism. Tightly associates with the E2 subunit of BCKDH complex and dephosphorylates Ser-333 of BCKDHA chain of the E1 subunit likely through on-off binding to individual E2 subunits of the 24-meric E2 core to increase the efficiency of the dephosphorylation reaction. Appears to dephosphorylate and inactivate cytosolic ACLY in response to changes of cellular carbohydrate abundance. Overnutrition and in particular high-fructose diet, activates MLXIPL/ChREBP leading to increased BCKDK to PPM1K ratio, phosphorylation of ACLY on Ser-454 and activation of its enzymatic activity that ultimately results in the generation of acetyl-CoA and malonyl-CoA immediate substrates of de novo lipogenesis. Recognizes phosphosites having SxS or RxxS motifs and strictly depends on Mn(2+) ions for the phosphatase activity. Regulates Ca(2+)-induced opening of mitochondrial transition pore and apoptotic cell death. The polypeptide is Protein phosphatase Mn(2+)-dependent 1K (Ppm1k) (Rattus norvegicus (Rat)).